The sequence spans 80 residues: Myocilin opposite strand protein (80 aa).

Residues 53 to 80 (EQAPPPHRTYLTVPPAPPPSPAEDPTVS) are disordered.

This Homo sapiens (Human) protein is Myocilin opposite strand protein.